We begin with the raw amino-acid sequence, 706 residues long: G2/M phase-specific E3 ubiquitin-protein ligase (706 aa).

Residues 11 to 51 (NLACVFCRKNDDCPNKYGEKKTKEKWNLTVHYYCLLMSSGI) form a C2HC pre-PHD-type zinc finger. The segment at 79 to 128 (LKCCVCKKNGASIGCVAPRCKRSYHFPCGLQRECIFQFTGNFASFCWNHR) adopts a PHD-type 1 zinc-finger fold. The segment at 143-193 (PCTICLEFIEPIPSYNILRSPCCKNAWFHRDCLQVQAINAGVFFFRCTICS) adopts a PHD-type 2; degenerate zinc-finger fold. The PHD-type 3 zinc finger occupies 237–286 (RCRCKEGRDYNAPDSKWEIKRCQCCGSSGTHLACSSLRSWEQNWECLECR). One can recognise an HECT domain in the interval 371-698 (IWTSALDAFR…IRNTLKLEKE (328 aa)).

The protein localises to the nucleus. Its subcellular location is the nucleolus. The protein resides in the cytoplasm. The enzyme catalyses S-ubiquitinyl-[E2 ubiquitin-conjugating enzyme]-L-cysteine + [acceptor protein]-L-lysine = [E2 ubiquitin-conjugating enzyme]-L-cysteine + N(6)-ubiquitinyl-[acceptor protein]-L-lysine.. Its pathway is protein modification; protein ubiquitination. Functionally, E3 ubiquitin-protein ligase which accepts ubiquitin from an E2 ubiquitin-conjugating enzyme in the form of a thioester and then directly transfers the ubiquitin to targeted substrates. Essential in early embryonic development to prevent apoptotic death. This is G2/M phase-specific E3 ubiquitin-protein ligase (G2E3) from Macaca fascicularis (Crab-eating macaque).